A 147-amino-acid polypeptide reads, in one-letter code: UPF0178 protein VS_2364 (147 aa).

It belongs to the UPF0178 family.

This chain is UPF0178 protein VS_2364, found in Vibrio atlanticus (strain LGP32) (Vibrio splendidus (strain Mel32)).